Consider the following 910-residue polypeptide: Leucine--tRNA ligase (910 aa).

Positions 42–52 (PYPSGKLHMGH) match the 'HIGH' region motif. The 'KMSKS' region motif lies at 658-662 (TMSKS). Residue Lys-661 coordinates ATP.

This sequence belongs to the class-I aminoacyl-tRNA synthetase family.

It localises to the cytoplasm. The catalysed reaction is tRNA(Leu) + L-leucine + ATP = L-leucyl-tRNA(Leu) + AMP + diphosphate. This Acidovorax ebreus (strain TPSY) (Diaphorobacter sp. (strain TPSY)) protein is Leucine--tRNA ligase.